The chain runs to 342 residues: Cell division protein ZipA (342 aa).

Topologically, residues 1-6 are periplasmic; the sequence is MEDLQL. The chain crosses the membrane as a helical span at residues 7-27; it reads VLFILGAIAIVAVLVHGFWSI. Topologically, residues 28-342 are cytoplasmic; it reads RRQQPKSLKD…DYLHRIRANA (315 aa). The interval 33 to 57 is disordered; it reads KSLKDSPMGNFYKQQADKESPPKRV. Over residues 47–57 the composition is skewed to basic and acidic residues; the sequence is QADKESPPKRV.

This sequence belongs to the ZipA family. In terms of assembly, interacts with FtsZ via their C-terminal domains.

It is found in the cell inner membrane. Functionally, essential cell division protein that stabilizes the FtsZ protofilaments by cross-linking them and that serves as a cytoplasmic membrane anchor for the Z ring. Also required for the recruitment to the septal ring of downstream cell division proteins. The chain is Cell division protein ZipA from Shewanella putrefaciens (strain CN-32 / ATCC BAA-453).